The chain runs to 82 residues: ATP synthase subunit c (82 aa).

2 helical membrane passes run 7–27 (LVALACGIIIGLGAIGACIGI) and 53–73 (FLLAGLIDAAFLIGVGIAMLF).

Belongs to the ATPase C chain family. F-type ATPases have 2 components, F(1) - the catalytic core - and F(0) - the membrane proton channel. F(1) has five subunits: alpha(3), beta(3), gamma(1), delta(1), epsilon(1). F(0) has three main subunits: a(1), b(2) and c(10-14). The alpha and beta chains form an alternating ring which encloses part of the gamma chain. F(1) is attached to F(0) by a central stalk formed by the gamma and epsilon chains, while a peripheral stalk is formed by the delta and b chains.

The protein localises to the cell inner membrane. Its function is as follows. F(1)F(0) ATP synthase produces ATP from ADP in the presence of a proton or sodium gradient. F-type ATPases consist of two structural domains, F(1) containing the extramembraneous catalytic core and F(0) containing the membrane proton channel, linked together by a central stalk and a peripheral stalk. During catalysis, ATP synthesis in the catalytic domain of F(1) is coupled via a rotary mechanism of the central stalk subunits to proton translocation. Functionally, key component of the F(0) channel; it plays a direct role in translocation across the membrane. A homomeric c-ring of between 10-14 subunits forms the central stalk rotor element with the F(1) delta and epsilon subunits. The polypeptide is ATP synthase subunit c (Leptothrix cholodnii (strain ATCC 51168 / LMG 8142 / SP-6) (Leptothrix discophora (strain SP-6))).